The chain runs to 211 residues: Arginine exporter protein ArgO (211 aa).

The next 6 helical transmembrane spans lie at 1–21 (MISY…PLGP), 37–57 (LMIA…GIFG), 68–88 (LLAL…FGAL), 111–131 (IIAT…DTFV), 147–167 (WFAL…ALLA), and 179–199 (AQRI…FQLA).

This sequence belongs to the LysE/ArgO transporter (TC 2.A.75) family.

The protein localises to the cell inner membrane. The enzyme catalyses L-arginine(in) = L-arginine(out). Involved in the export of arginine. Important to control the intracellular level of arginine and the correct balance between arginine and lysine. The polypeptide is Arginine exporter protein ArgO (Salmonella newport (strain SL254)).